Consider the following 226-residue polypeptide: Ribonuclease HII (226 aa).

An RNase H type-2 domain is found at 24-216; it reads QRLCGVDEAG…VRKVLERGMV (193 aa). Residues D30, E31, and D125 each coordinate a divalent metal cation.

This sequence belongs to the RNase HII family. Requires Mn(2+) as cofactor. Mg(2+) is required as a cofactor.

It localises to the cytoplasm. The enzyme catalyses Endonucleolytic cleavage to 5'-phosphomonoester.. Endonuclease that specifically degrades the RNA of RNA-DNA hybrids. This chain is Ribonuclease HII, found in Cupriavidus metallidurans (strain ATCC 43123 / DSM 2839 / NBRC 102507 / CH34) (Ralstonia metallidurans).